The sequence spans 388 residues: GTPase Obg (388 aa).

Residues 1-159 enclose the Obg domain; sequence MKFVDEAVIR…RSLKLELLLL (159 aa). In terms of domain architecture, OBG-type G spans 160–333; it reads ADVGLLGMPN…LALKLLDYIA (174 aa). Residues 166 to 173, 191 to 195, 213 to 216, 283 to 286, and 314 to 316 each bind GTP; these read GMPNAGKS, FTTLV, DIPG, NKTD, and SAY. S173 and T193 together coordinate Mg(2+).

It belongs to the TRAFAC class OBG-HflX-like GTPase superfamily. OBG GTPase family. In terms of assembly, monomer. Mg(2+) is required as a cofactor.

The protein localises to the cytoplasm. In terms of biological role, an essential GTPase which binds GTP, GDP and possibly (p)ppGpp with moderate affinity, with high nucleotide exchange rates and a fairly low GTP hydrolysis rate. Plays a role in control of the cell cycle, stress response, ribosome biogenesis and in those bacteria that undergo differentiation, in morphogenesis control. The sequence is that of GTPase Obg from Shewanella putrefaciens (strain CN-32 / ATCC BAA-453).